Consider the following 34-residue polypeptide: Delta-theraphotoxin-Hm1b (34 aa).

3 cysteine pairs are disulfide-bonded: cysteine 2/cysteine 16, cysteine 9/cysteine 21, and cysteine 15/cysteine 28. Phenylalanine 34 bears the Phenylalanine amide mark.

This sequence belongs to the neurotoxin 10 (Hwtx-1) family. 09 (HaTx) subfamily. In terms of tissue distribution, expressed by the venom gland.

It localises to the secreted. Gating-modifier toxin that potently and selectively acts on Nav1.1/SCN1A and Nav1.3/SCN3A. It enhances hNav1.1/SCN1A currents and delays fast inactivation of the channel (EC(50)=11.6 nM), leading to a sustained current. Similar effects are observed at Nav1.3/SCN3A (EC(50)=11.8 nM), but with less sustained currents. When tested on Nav1.2/SCN2A, the native toxin decreases the peak current by 50% at saturating concentration, whereas the recombinant toxin only shows a weak decrease of peak current. The native toxin specifically activates the voltage-gated sodium channel Nav1.1/SCN1A in somatosensory neurons to elicit acute pain and mechanical allodynia. When tested on Nav1.1/SCN1A, the toxin induces a hyperpolarising shift of the voltage-dependence of steady-state activation, and induces a depolarizing shift in the voltage dependence of inactivation. In addition, it does not modify the recovery from fast inactivation in Nav1.1/SCN1A. The toxin hydrophobic face probably interacts with the domain IV voltage-sensor of Nav1.1/SCN1A and Nav1.3/SCN3A and may trap the voltage-sensing S4 helix in a partially activated state. In vivo, intracerebroventricular injection into mice elicits convulsions, spasms, tremors and rapid death. When injected into mouse hindpaw, the toxin elicits an immediate and robust response to pain. However, intraplantar injection of toxin does not cause neurogenic inflammation or alter sensitivity to heat, indicative of a modality-specific effect on mechanosensitive neurons. This Heteroscodra maculata (Togo starburst tarantula) protein is Delta-theraphotoxin-Hm1b.